Here is a 160-residue protein sequence, read N- to C-terminus: UPF0260 protein GDI1595/Gdia_1801 (160 aa).

It belongs to the UPF0260 family.

This Gluconacetobacter diazotrophicus (strain ATCC 49037 / DSM 5601 / CCUG 37298 / CIP 103539 / LMG 7603 / PAl5) protein is UPF0260 protein GDI1595/Gdia_1801.